We begin with the raw amino-acid sequence, 327 residues long: Ribonucleoside-diphosphate reductase small chain (327 aa).

Positions 70, 101, and 104 each coordinate Fe cation. Residue tyrosine 108 is part of the active site. Residues glutamate 164, glutamate 198, and histidine 201 each coordinate Fe cation.

This sequence belongs to the ribonucleoside diphosphate reductase small chain family. Heterotetramer composed of a homodimer of the large subunit (R1) and a homodimer of the small subunit (R2). Larger multisubunit protein complex are also active, composed of (R1)n(R2)n. It depends on Fe cation as a cofactor.

The enzyme catalyses a 2'-deoxyribonucleoside 5'-diphosphate + [thioredoxin]-disulfide + H2O = a ribonucleoside 5'-diphosphate + [thioredoxin]-dithiol. Ribonucleoside-diphosphate reductase holoenzyme provides the precursors necessary for viral DNA synthesis. Allows virus growth in non-dividing cells. Catalyzes the biosynthesis of deoxyribonucleotides from the corresponding ribonucleotides. This chain is Ribonucleoside-diphosphate reductase small chain, found in Ornithodoros (relapsing fever ticks).